Reading from the N-terminus, the 325-residue chain is Aldo-keto reductase family 1 member A1 (325 aa).

Residue Ala2 is modified to N-acetylalanine. Ser4 carries the post-translational modification Phosphoserine. NADP(+) is bound by residues 11 to 20, Thr21, and Trp22; that span reads GQKMPLIGLG. Residue Ser38 is modified to Phosphoserine. Asp45 contributes to the NADP(+) binding site. The active-site Proton donor is Tyr50. An N6-acetyllysine; alternate modification is found at Lys127. An N6-succinyllysine; alternate modification is found at Lys127. NADP(+) contacts are provided by Ser162, Asn163, Ser211, Leu213, Ser215, Ser216, Lys263, Ser264, Val265, Thr266, Arg269, and Asn273. At Ser211 the chain carries Phosphoserine.

Belongs to the aldo/keto reductase family. Monomer.

It localises to the cytoplasm. The protein localises to the cytosol. The protein resides in the apical cell membrane. The catalysed reaction is a primary alcohol + NADP(+) = an aldehyde + NADPH + H(+). It carries out the reaction L-gulonate + NADP(+) = aldehydo-D-glucuronate + NADPH + H(+). The enzyme catalyses L-gulono-1,4-lactone + NADP(+) = D-glucurono-3,6-lactone + NADPH + H(+). It catalyses the reaction allyl alcohol + NADP(+) = acrolein + NADPH + H(+). The catalysed reaction is glycerol + NADP(+) = D-glyceraldehyde + NADPH + H(+). It carries out the reaction glycerol + NADP(+) = L-glyceraldehyde + NADPH + H(+). The enzyme catalyses hydroxyacetone + NADP(+) = methylglyoxal + NADPH + H(+). It catalyses the reaction 3-deoxyfructose + NADP(+) = 3-deoxyglucosone + NADPH + H(+). The catalysed reaction is (R)-mevalonate + NADP(+) = (R)-mevaldate + NADPH + H(+). It carries out the reaction pyridine 3-methanol + NADP(+) = pyridine-3-carbaldehyde + NADPH + H(+). The enzyme catalyses S-nitroso-CoA + NADPH + H(+) = sulfinamide-CoA + NADP(+). It catalyses the reaction S-nitrosoglutathione + NADPH + H(+) = S-(hydroxysulfenamide)glutathione + NADP(+). Catalyzes the NADPH-dependent reduction of a wide variety of carbonyl-containing compounds to their corresponding alcohols. Displays enzymatic activity towards endogenous metabolites such as aromatic and aliphatic aldehydes, ketones, monosaccharides and bile acids, with a preference for negatively charged substrates, such as glucuronate and succinic semialdehyde. Plays an important role in ascorbic acid biosynthesis by catalyzing the reduction of D-glucuronic acid and D-glucurono-gamma-lactone. Functions as a detoxifiying enzyme by reducing a range of toxic aldehydes. Reduces methylglyoxal and 3-deoxyglucosone, which are present at elevated levels under hyperglycemic conditions and are cytotoxic. Involved also in the detoxification of lipid-derived aldehydes like acrolein. Plays a role in the activation of procarcinogens, such as polycyclic aromatic hydrocarbon trans-dihydrodiols, and in the metabolism of various xenobiotics and drugs. Also acts as an inhibitor of protein S-nitrosylation by mediating degradation of S-nitroso-coenzyme A (S-nitroso-CoA), a cofactor required to S-nitrosylate proteins. S-nitroso-CoA reductase activity is involved in reprogramming intermediary metabolism in renal proximal tubules, notably by inhibiting protein S-nitrosylation of isoform 2 of PKM (PKM2). Also acts as a S-nitroso-glutathione reductase by catalyzing the NADPH-dependent reduction of S-nitrosoglutathione. Displays no reductase activity towards retinoids. The polypeptide is Aldo-keto reductase family 1 member A1 (Bos taurus (Bovine)).